Consider the following 176-residue polypeptide: 3-hydroxydecanoyl-[acyl-carrier-protein] dehydratase (176 aa).

Residue His71 is part of the active site.

This sequence belongs to the thioester dehydratase family. FabA subfamily. Homodimer.

Its subcellular location is the cytoplasm. It carries out the reaction a (3R)-hydroxyacyl-[ACP] = a (2E)-enoyl-[ACP] + H2O. The catalysed reaction is (3R)-hydroxydecanoyl-[ACP] = (2E)-decenoyl-[ACP] + H2O. The enzyme catalyses (2E)-decenoyl-[ACP] = (3Z)-decenoyl-[ACP]. It participates in lipid metabolism; fatty acid biosynthesis. Its function is as follows. Necessary for the introduction of cis unsaturation into fatty acids. Catalyzes the dehydration of (3R)-3-hydroxydecanoyl-ACP to E-(2)-decenoyl-ACP and then its isomerization to Z-(3)-decenoyl-ACP. Can catalyze the dehydratase reaction for beta-hydroxyacyl-ACPs with saturated chain lengths up to 16:0, being most active on intermediate chain length. This Rhodopseudomonas palustris (strain HaA2) protein is 3-hydroxydecanoyl-[acyl-carrier-protein] dehydratase.